The primary structure comprises 322 residues: ATP-dependent 6-phosphofructokinase (322 aa).

ATP contacts are provided by residues Gly12, 73–74 (RF), and 103–106 (GDGT). A Mg(2+)-binding site is contributed by Asp104. A substrate-binding site is contributed by 126-128 (TID). Asp128 functions as the Proton acceptor in the catalytic mechanism. Residue Arg155 coordinates ADP. Substrate-binding positions include Arg163 and 170 to 172 (MGR). ADP is bound by residues 186–188 (GSE), Lys212, and 214–216 (KPS). Substrate contacts are provided by residues Glu223, Arg245, and 251-254 (HTQR).

Belongs to the phosphofructokinase type A (PFKA) family. ATP-dependent PFK group I subfamily. Prokaryotic clade 'B1' sub-subfamily. In terms of assembly, homotetramer. Mg(2+) is required as a cofactor.

The protein resides in the cytoplasm. It catalyses the reaction beta-D-fructose 6-phosphate + ATP = beta-D-fructose 1,6-bisphosphate + ADP + H(+). Its pathway is carbohydrate degradation; glycolysis; D-glyceraldehyde 3-phosphate and glycerone phosphate from D-glucose: step 3/4. Its activity is regulated as follows. Allosterically activated by ADP and other diphosphonucleosides, and allosterically inhibited by phosphoenolpyruvate. Its function is as follows. Catalyzes the phosphorylation of D-fructose 6-phosphate to fructose 1,6-bisphosphate by ATP, the first committing step of glycolysis. This is ATP-dependent 6-phosphofructokinase from Mesomycoplasma hyopneumoniae (strain J / ATCC 25934 / NCTC 10110) (Mycoplasma hyopneumoniae).